The sequence spans 188 residues: Proline-rich protein 3 (188 aa).

Residues 1-157 form a disordered region; that stretch reads MPKRKKQNHH…DPQVMEDKSD (157 aa). 2 stretches are compositionally biased toward pro residues: residues 35–46 and 69–82; these read IGPPSLLGPPPM and LIPP…PPWG. A compositionally biased stretch (low complexity) spans 83 to 96; the sequence is RGPIRRGLGPRSSP. A compositionally biased stretch (basic and acidic residues) spans 145–157; sequence PKDDPQVMEDKSD. A C3H1-type zinc finger spans residues 155–183; it reads KSDRPVCRHFAKKGHCRYEDLCAFYHPGV.

This chain is Proline-rich protein 3 (PRR3), found in Homo sapiens (Human).